The chain runs to 804 residues: Leucine--tRNA ligase (804 aa).

A 'HIGH' region motif is present at residues 39–50 (PFPSGKGLHVGH). Residues 573 to 577 (KMSKS) carry the 'KMSKS' region motif. K576 lines the ATP pocket.

The protein belongs to the class-I aminoacyl-tRNA synthetase family.

The protein localises to the cytoplasm. It catalyses the reaction tRNA(Leu) + L-leucine + ATP = L-leucyl-tRNA(Leu) + AMP + diphosphate. The chain is Leucine--tRNA ligase from Lactobacillus gasseri (strain ATCC 33323 / DSM 20243 / BCRC 14619 / CIP 102991 / JCM 1131 / KCTC 3163 / NCIMB 11718 / NCTC 13722 / AM63).